The sequence spans 1013 residues: Poly [ADP-ribose] polymerase 1 (1013 aa).

A2 is modified (N-acetylalanine). Residues 9-93 form a PARP-type 1 zinc finger; it reads YRVEYAKSGR…KVKKTAEAGG (85 aa). 2 residues coordinate Zn(2+): C21 and C24. S41 is subject to Phosphoserine. H53 and C56 together coordinate Zn(2+). 2 positions are modified to N6-acetyllysine: K97 and K105. The PARP-type 2 zinc-finger motif lies at 113 to 203; the sequence is FAAEYAKSNR…VLKKQLPGVK (91 aa). 2 residues coordinate Zn(2+): C125 and C128. The residue at position 131 (K131) is an N6-acetyllysine. Residues H159 and C162 each contribute to the Zn(2+) site. S177, S179, and S185 each carry phosphoserine. A Glycyl lysine isopeptide (Lys-Gly) (interchain with G-Cter in SUMO2) cross-link involves residue K192. The interval 198–233 is disordered; that stretch reads QLPGVKSEGKRKGDEVDGADEVAKKKSKKGKDKDSK. K203 is covalently cross-linked (Glycyl lysine isopeptide (Lys-Gly) (interchain with G-Cter in SUMO1); alternate). K203 is covalently cross-linked (Glycyl lysine isopeptide (Lys-Gly) (interchain with G-Cter in SUMO2); alternate). 2 short sequence motifs (nuclear localization signal) span residues 207 to 209 and 221 to 226; these read KRK and KKKSKK. The PADR1 zinc-binding domain occupies 225-359; that stretch reads KKGKDKDSKL…VKKQDRIFPP (135 aa). K249 is covalently cross-linked (Glycyl lysine isopeptide (Lys-Gly) (interchain with G-Cter in SUMO2)). Phosphoserine is present on residues S274 and S277. Residues 290–332 form a zinc ribbon region; it reads GALLPCKECSGQLVFKSDAYYCTGDVTAWTKCMVKTQTPSRKE. Residues C295, C298, C311, and C321 each contribute to the Zn(2+) site. The disordered stretch occupies residues 357–383; that stretch reads FPPETSAPAPPHLPPSVTSAPTAVNSS. The span at 372–383 shows a compositional bias: polar residues; it reads SVTSAPTAVNSS. Positions 373-523 are automodification domain; it reads VTSAPTAVNS…GVNKSEKRMK (151 aa). The 92-residue stretch at 385 to 476 folds into the BRCT domain; that stretch reads PADKPLSNMK…KSLQELLSAH (92 aa). D387 carries the polyADP-ribosyl aspartic acid modification. PolyADP-ribosyl glutamic acid occurs at positions 407, 413, 435, 437, 444, 445, and 456. K467 participates in a covalent cross-link: Glycyl lysine isopeptide (Lys-Gly) (interchain with G-Cter in SUMO2). A polyADP-ribosyl glutamic acid mark is found at E471 and E484. K486 is covalently cross-linked (Glycyl lysine isopeptide (Lys-Gly) (interchain with G-Cter in SUMO1); alternate). A Glycyl lysine isopeptide (Lys-Gly) (interchain with G-Cter in SUMO2); alternate cross-link involves residue K486. PolyADP-ribosyl glutamic acid occurs at positions 488 and 491. Residues 495 to 516 form a disordered region; the sequence is PKGKSAAPSKKSKGLYKEEGVN. 3 positions are modified to ADP-ribosylserine: S499, S503, and S506. Residue K511 forms a Glycyl lysine isopeptide (Lys-Gly) (interchain with G-Cter in SUMO2) linkage. PolyADP-ribosyl glutamic acid is present on residues E512 and E513. S518 carries the ADP-ribosylserine modification. E519 bears the PolyADP-ribosyl glutamic acid mark. At K520 the chain carries N6-(ADP-ribosyl)lysine. K527 is covalently cross-linked (Glycyl lysine isopeptide (Lys-Gly) (interchain with G-Cter in SUMO2)). A WGR domain is found at 541–637; it reads SAHVLEKGGK…KNFTKYPKKF (97 aa). T593 bears the Phosphothreonine mark. K599 and K620 each carry N6-acetyllysine. Residues 661–778 form the PARP alpha-helical domain; the sequence is KSKLPKAVQE…DIEVAYSLLR (118 aa). Residue K747 forms a Glycyl lysine isopeptide (Lys-Gly) (interchain with G-Cter in SUMO1); alternate linkage. A Glycyl lysine isopeptide (Lys-Gly) (interchain with G-Cter in SUMO2); alternate cross-link involves residue K747. A phosphoserine mark is found at S781 and S785. The PARP catalytic domain maps to 787–1013; sequence DPIDVNYEKL…LKFNFKTSLW (227 aa). NAD(+) contacts are provided by residues 861–863, G870, R877, and S903; that span reads HGS. Residue E987 is the For poly [ADP-ribose] polymerase activity of the active site.

This sequence belongs to the ARTD/PARP family. In terms of assembly, homodimer; PARP-type zinc-fingers from separate PARP1 molecules form a dimer module that specifically recognizes DNA strand breaks. Heterodimer; heterodimerizes with PARP2. Interacts (via the PARP catalytic domain) with HPF1. Interacts with NMNAT1. Interacts with nucleosomes; with a preference for nucleosomes containing H2A.X. Interacts with APTX. Component of a base excision repair (BER) complex, containing at least XRCC1, PARP1, PARP2, POLB and LRIG3. Interacts with SRY. The SWAP complex consists of NPM1, NCL, PARP1 and SWAP70. Interacts with TIAM2. Interacts with PARP3; leading to activate PARP1 in absence of DNA. Interacts (when poly-ADP-ribosylated) with CHD1L (via macro domain). Interacts with the DNA polymerase alpha catalytic subunit POLA1; this interaction functions as part of the control of replication fork progression. Interacts with EEF1A1 and TXK. Interacts with RNF4. Interacts with RNF146. Interacts with ZNF423. Interacts with APLF. Interacts with SNAI1 (via zinc fingers); the interaction requires SNAI1 to be poly-ADP-ribosylated and non-phosphorylated (active) by GSK3B. Interacts (when poly-ADP-ribosylated) with PARP9. Interacts with NR4A3; activates PARP1 by improving acetylation of PARP1 and suppressing the interaction between PARP1 and SIRT1. Interacts (via catalytic domain) with PUM3; the interaction inhibits the poly-ADP-ribosylation activity of PARP1 and the degradation of PARP1 by CASP3 following genotoxic stress. Interacts with ZNF365. Interacts with RRP1B. Interacts with TIMELESS; the interaction is direct. Interacts with CGAS; leading to impede the formation of the PARP1-TIMELESS complex. Interacts with KHDC3L, the interaction is increased following the formation of DNA double-strand breaks. Interacts (when auto-poly-ADP-ribosylated) with XRCC1; leading to inhibit PARP1 ADP-ribosyltransferase activity. Interacts with SPINDOC; promoting PARP1 ADP-ribosyltransferase activity. Interacts with BANF1; leading to inhibit PARP1 ADP-ribosyltransferase activity in response to oxidative DNA damage. Interacts (when sumoylated and ubiquitinated) with VCP/p97; leading to its extraction from chromatin. Interacts with YARS1; promoting PARP1 ADP-ribosyltransferase activity. Interacts with PACMP micropeptide; Interacts with PACMP micropeptide; interaction. Interacts (when poly-ADP-ribosylated) with isoform 1 of MACROH2A1; MACROH2A1 specifically binds to poly-ADP-ribose chains and inhibits PARP1 activity, limiting the consumption of nuclear NAD(+). Interacts with CARM1; promoting recruitment to replication forks. Interacts with RECQL. Interacts with ZNF32; the interaction reshapes ZNF432 interacting proteins. Interacts with TPRN; TPRN interacts with a number of DNA damage response proteins, is recruited to sites of DNA damage and may play a role in DNA damage repair. Interacts (when auto-poly-ADP-ribosylated) with AIFM1. In terms of processing, poly-ADP-ribosylated on serine, glutamate and aspartate residues by autocatalysis. Auto-ADP-ribosylation on serine takes place following interaction with HPF1. Auto poly-ADP-ribosylation on serine residues promotes its dissociation from chromatin. Poly-ADP-ribosylated by PARP2; poly-ADP-ribosylation mediates the recruitment of CHD1L to DNA damage sites. Mono-ADP-ribosylated at Lys-520 by SIRT6 in response to oxidative stress, promoting recruitment to double-strand breaks (DSBs) sites. S-nitrosylated, leading to inhibit transcription regulation activity. Post-translationally, phosphorylated at Thr-593 by PRKDC in response to DNA damage following virus infection, promoting its translocation to the cytosol. Phosphorylated by TXK. In terms of processing, proteolytically cleaved by caspase-3 (CASP3) and caspase-7 (CASP7) in response to apoptosis to generate the Poly [ADP-ribose] polymerase 1, processed N-terminus and Poly [ADP-ribose] polymerase 1, processed C-terminus forms. Sumoylated with SUMO1 or SUMO2 by PIAS4 following prolonged residence (trapping) to chromatin. Sumoylation promotes ubiquitination by RNF4 and removal from chromatin by VCP/p97. Post-translationally, ubiquitinated by RNF4 following sumoylation by PIAS4 in response to prolonged residence (trapping) to chromatin. Ubiquitination promotes removal from chromatin by VCP/p97.

It is found in the chromosome. It localises to the nucleus. The protein resides in the nucleolus. The protein localises to the cytoplasm. Its subcellular location is the cytosol. It carries out the reaction NAD(+) + (ADP-D-ribosyl)n-acceptor = nicotinamide + (ADP-D-ribosyl)n+1-acceptor + H(+).. The enzyme catalyses L-seryl-[protein] + NAD(+) = O-(ADP-D-ribosyl)-L-seryl-[protein] + nicotinamide + H(+). The catalysed reaction is L-aspartyl-[protein] + NAD(+) = 4-O-(ADP-D-ribosyl)-L-aspartyl-[protein] + nicotinamide. It catalyses the reaction L-glutamyl-[protein] + NAD(+) = 5-O-(ADP-D-ribosyl)-L-glutamyl-[protein] + nicotinamide. It carries out the reaction L-tyrosyl-[protein] + NAD(+) = O-(ADP-D-ribosyl)-L-tyrosyl-[protein] + nicotinamide + H(+). The enzyme catalyses L-histidyl-[protein] + NAD(+) = N(tele)-(ADP-D-ribosyl)-L-histidyl-[protein] + nicotinamide + H(+). With respect to regulation, ADP-ribosyltransferase activity is regulated via an allosteric activation mechanism. In absence of activation signal, PARP1 is autoinhibited by the PARP alpha-helical domain (also named HD region), which prevents effective NAD(+)-binding. Activity is highly stimulated by signals, such as DNA strand breaks. Binding to damaged DNA unfolds the PARP alpha-helical domain, relieving autoinhibition. Poly-ADP-ribosyltransferase activity is tightly regulated and PARP1 is removed from damaged chromatin following initial poly-ADP-ribosylation of chromatin to avoid prolonged residence (trapping) that has cytotoxic consequences. A number of factors (VCP/p97) or post-translational modifications (auto-poly-ADP-ribosylation or ubiquitination) promote PARP1 removal from chromatin. Functionally, poly-ADP-ribosyltransferase that mediates poly-ADP-ribosylation of proteins and plays a key role in DNA repair. Mediates glutamate, aspartate, serine, histidine or tyrosine ADP-ribosylation of proteins: the ADP-D-ribosyl group of NAD(+) is transferred to the acceptor carboxyl group of target residues and further ADP-ribosyl groups are transferred to the 2'-position of the terminal adenosine moiety, building up a polymer with an average chain length of 20-30 units. Serine ADP-ribosylation of proteins constitutes the primary form of ADP-ribosylation of proteins in response to DNA damage. Specificity for the different amino acids is conferred by interacting factors, such as HPF1 and NMNAT1. Following interaction with HPF1, catalyzes serine ADP-ribosylation of target proteins; HPF1 confers serine specificity by completing the PARP1 active site. Also catalyzes tyrosine ADP-ribosylation of target proteins following interaction with HPF1. Following interaction with NMNAT1, catalyzes glutamate and aspartate ADP-ribosylation of target proteins; NMNAT1 confers glutamate and aspartate specificity. PARP1 initiates the repair of DNA breaks: recognizes and binds DNA breaks within chromatin and recruits HPF1, licensing serine ADP-ribosylation of target proteins, such as histones (H2BS6ADPr and H3S10ADPr), thereby promoting decompaction of chromatin and the recruitment of repair factors leading to the reparation of DNA strand breaks. HPF1 initiates serine ADP-ribosylation but restricts the polymerase activity of PARP1 in order to limit the length of poly-ADP-ribose chains. In addition to base excision repair (BER) pathway, also involved in double-strand breaks (DSBs) repair: together with TIMELESS, accumulates at DNA damage sites and promotes homologous recombination repair by mediating poly-ADP-ribosylation. Mediates the poly-ADP-ribosylation of a number of proteins, including itself, APLF, CHFR and NFAT5. In addition to proteins, also able to ADP-ribosylate DNA: catalyzes ADP-ribosylation of DNA strand break termini containing terminal phosphates and a 2'-OH group in single- and double-stranded DNA, respectively. Required for PARP9 and DTX3L recruitment to DNA damage sites. PARP1-dependent PARP9-DTX3L-mediated ubiquitination promotes the rapid and specific recruitment of 53BP1/TP53BP1, UIMC1/RAP80, and BRCA1 to DNA damage sites. PARP1-mediated DNA repair in neurons plays a role in sleep: senses DNA damage in neurons and promotes sleep, facilitating efficient DNA repair. In addition to DNA repair, also involved in other processes, such as transcription regulation, programmed cell death, membrane repair, adipogenesis and innate immunity. Acts as a repressor of transcription: binds to nucleosomes and modulates chromatin structure in a manner similar to histone H1, thereby altering RNA polymerase II. Acts both as a positive and negative regulator of transcription elongation, depending on the context. Acts as a positive regulator of transcription elongation by mediating poly-ADP-ribosylation of NELFE, preventing RNA-binding activity of NELFE and relieving transcription pausing. Acts as a negative regulator of transcription elongation in response to DNA damage by catalyzing poly-ADP-ribosylation of CCNT1, disrupting the phase separation activity of CCNT1 and subsequent activation of CDK9. Involved in replication fork progression following interaction with CARM1: mediates poly-ADP-ribosylation at replication forks, slowing fork progression. Poly-ADP-ribose chains generated by PARP1 also play a role in poly-ADP-ribose-dependent cell death, a process named parthanatos. Also acts as a negative regulator of the cGAS-STING pathway. Acts by mediating poly-ADP-ribosylation of CGAS: PARP1 translocates into the cytosol following phosphorylation by PRKDC and catalyzes poly-ADP-ribosylation and inactivation of CGAS. Acts as a negative regulator of adipogenesis: catalyzes poly-ADP-ribosylation of histone H2B on 'Glu-35' (H2BE35ADPr) following interaction with NMNAT1, inhibiting phosphorylation of H2B at 'Ser-36' (H2BS36ph), thereby blocking expression of pro-adipogenetic genes. Involved in the synthesis of ATP in the nucleus, together with NMNAT1, PARG and NUDT5. Nuclear ATP generation is required for extensive chromatin remodeling events that are energy-consuming. In terms of biological role, promotes AIFM1-mediated apoptosis. This form, which translocates into the cytoplasm following cleavage by caspase-3 (CASP3) and caspase-7 (CASP7) in response to apoptosis, is auto-poly-ADP-ribosylated and serves as a poly-ADP-ribose carrier to induce AIFM1-mediated apoptosis. This cleavage form irreversibly binds to DNA breaks and interferes with DNA repair, promoting DNA damage-induced apoptosis. This chain is Poly [ADP-ribose] polymerase 1 (PARP1), found in Cricetulus griseus (Chinese hamster).